The sequence spans 213 residues: Ribulose-phosphate 3-epimerase (213 aa).

Residue serine 9 participates in substrate binding. Histidine 34, aspartate 36, and histidine 66 together coordinate a divalent metal cation. Aspartate 36 acts as the Proton acceptor in catalysis. Substrate is bound by residues histidine 66, 139-142 (GFGG), 166-168 (DGG), and 186-187 (GS). Residue aspartate 166 coordinates a divalent metal cation. Aspartate 166 acts as the Proton donor in catalysis.

Belongs to the ribulose-phosphate 3-epimerase family. Co(2+) is required as a cofactor. Fe(2+) serves as cofactor. The cofactor is Mn(2+). Requires Zn(2+) as cofactor.

The catalysed reaction is D-ribulose 5-phosphate = D-xylulose 5-phosphate. It functions in the pathway carbohydrate degradation; pentose phosphate pathway; D-xylulose 5-phosphate from D-ribulose 5-phosphate (non-oxidative stage): step 1/1. Catalyzes the reversible epimerization of D-ribulose 5-phosphate to D-xylulose 5-phosphate. The sequence is that of Ribulose-phosphate 3-epimerase (RPE1) from Encephalitozoon cuniculi (strain GB-M1) (Microsporidian parasite).